We begin with the raw amino-acid sequence, 152 residues long: SsrA-binding protein (152 aa).

The protein belongs to the SmpB family.

It is found in the cytoplasm. Its function is as follows. Required for rescue of stalled ribosomes mediated by trans-translation. Binds to transfer-messenger RNA (tmRNA), required for stable association of tmRNA with ribosomes. tmRNA and SmpB together mimic tRNA shape, replacing the anticodon stem-loop with SmpB. tmRNA is encoded by the ssrA gene; the 2 termini fold to resemble tRNA(Ala) and it encodes a 'tag peptide', a short internal open reading frame. During trans-translation Ala-aminoacylated tmRNA acts like a tRNA, entering the A-site of stalled ribosomes, displacing the stalled mRNA. The ribosome then switches to translate the ORF on the tmRNA; the nascent peptide is terminated with the 'tag peptide' encoded by the tmRNA and targeted for degradation. The ribosome is freed to recommence translation, which seems to be the essential function of trans-translation. The sequence is that of SsrA-binding protein from Rickettsia prowazekii (strain Madrid E).